Here is a 230-residue protein sequence, read N- to C-terminus: Ribonuclease 1 (230 aa).

The first 22 residues, 1–22 (MKILLASLCLISLLVILPSVFS), serve as a signal peptide directing secretion. Glutamine 38 serves as a coordination point for RNA. An intrachain disulfide couples cysteine 44 to cysteine 50. Residues histidine 65, phenylalanine 115, 118-119 (HE), and 122-123 (KH) contribute to the RNA site. Residue histidine 65 is the Proton donor of the active site. Cystine bridges form between cysteine 80–cysteine 126, cysteine 186–cysteine 221, and cysteine 202–cysteine 213. Residue glutamate 119 is part of the active site. The Proton acceptor role is filled by histidine 123.

This sequence belongs to the RNase T2 family.

It catalyses the reaction a ribonucleotidyl-ribonucleotide-RNA + H2O = a 3'-end 3'-phospho-ribonucleotide-RNA + a 5'-end dephospho-ribonucleoside-RNA + H(+). May remobilize phosphate, particularly when cells senesce or when phosphate becomes limiting. The sequence is that of Ribonuclease 1 (RNS1) from Arabidopsis thaliana (Mouse-ear cress).